Consider the following 318-residue polypeptide: Homeobox protein Nkx-2.5 (318 aa).

Residues 137 to 196 constitute a DNA-binding region (homeobox); it reads RRKPRVLFSQAQVYELERRFKQQRYLSPAERDQLASVLKLTSTQVKIWFQNRRYKCKRQR.

The protein belongs to the NK-2 homeobox family. Homodimer (via the homeobox); binds DNA as homodimer. Interacts (via the homeobox) with TBX5 (via the T-box); this complex binds DNA. Interacts with HIPK1 and HIPK2, but not HIPK3. Interacts with the C-terminal zinc finger of GATA4 through its homeobox domain. Also interacts with JARID2 which represses its ability to activate transcription of ANF. Interacts with FBLIM1. Interacts with TBX18. Interacts with histone methyltransferase NSD2 (via HMG box). Interacts with NEDD9. Interacts with TBX1.

It is found in the nucleus. Its function is as follows. Transcription factor required for the development of the heart and the spleen. During heart development, acts as a transcriptional activator of NPPA/ANF in cooperation with GATA4. May cooperate with TBX2 to negatively modulate expression of NPPA/ANF in the atrioventricular canal. Binds to the core DNA motif of NPPA promoter. Together with PBX1, required for spleen development through a mechanism that involves CDKN2B repression. Positively regulates transcription of genes such as COL3A1 and MMP2, resulting in increased pulmonary endothelial fibrosis in response to hypoxia. The polypeptide is Homeobox protein Nkx-2.5 (Nkx2-5) (Rattus norvegicus (Rat)).